A 160-amino-acid chain; its full sequence is Snaclec subunit A (160 aa).

The N-terminal stretch at 1 to 23 (MGRFILVNLGLLVVAFSLRGSEA) is a signal peptide. 3 cysteine pairs are disulfide-bonded: Cys25–Cys36, Cys53–Cys150, and Cys125–Cys142. The region spanning 32–151 (YDKYCYKVFD…CDFTLPFICK (120 aa)) is the C-type lectin domain.

It belongs to the snaclec family. Heterodimer of subunits A and B; disulfide-linked. As to expression, expressed by the venom gland.

The protein localises to the secreted. Interferes with one step of hemostasis (modulation of platelet aggregation, or coagulation cascade, for example). The protein is Snaclec subunit A of Philodryas olfersii (Green snake).